Here is a 599-residue protein sequence, read N- to C-terminus: Sulfite reductase [NADPH] flavoprotein alpha-component (599 aa).

One can recognise a Flavodoxin-like domain in the interval 64–202; it reads ITLISASQTG…AAAEWRARVV (139 aa). FMN-binding positions include 70-75, 117-120, and 153-162; these read SQTGNA, STQG, and LGDTSYEFFC. The FAD-binding FR-type domain occupies 234-448; the sequence is EAPLTATLSV…IEHNDNFRLP (215 aa). FAD-binding positions include threonine 322, alanine 356, 386-389, 404-406, tyrosine 410, and 419-422; these read RLYS, TVG, and GGAS. NADP(+) contacts are provided by residues 519–520, 525–529, and aspartate 561; these read SR and KIYVQ. Residue tyrosine 599 participates in FAD binding.

It belongs to the NADPH-dependent sulphite reductase flavoprotein subunit CysJ family. In the N-terminal section; belongs to the flavodoxin family. The protein in the C-terminal section; belongs to the flavoprotein pyridine nucleotide cytochrome reductase family. As to quaternary structure, alpha(8)-beta(8). The alpha component is a flavoprotein, the beta component is a hemoprotein. It depends on FAD as a cofactor. FMN is required as a cofactor.

The catalysed reaction is hydrogen sulfide + 3 NADP(+) + 3 H2O = sulfite + 3 NADPH + 4 H(+). It participates in sulfur metabolism; hydrogen sulfide biosynthesis; hydrogen sulfide from sulfite (NADPH route): step 1/1. Functionally, component of the sulfite reductase complex that catalyzes the 6-electron reduction of sulfite to sulfide. This is one of several activities required for the biosynthesis of L-cysteine from sulfate. The flavoprotein component catalyzes the electron flow from NADPH -&gt; FAD -&gt; FMN to the hemoprotein component. The sequence is that of Sulfite reductase [NADPH] flavoprotein alpha-component from Klebsiella pneumoniae subsp. pneumoniae (strain ATCC 700721 / MGH 78578).